The following is a 460-amino-acid chain: Argininosuccinate lyase (460 aa).

The protein belongs to the lyase 1 family. Argininosuccinate lyase subfamily.

It is found in the cytoplasm. The enzyme catalyses 2-(N(omega)-L-arginino)succinate = fumarate + L-arginine. The protein operates within amino-acid biosynthesis; L-arginine biosynthesis; L-arginine from L-ornithine and carbamoyl phosphate: step 3/3. The protein is Argininosuccinate lyase of Campylobacter jejuni subsp. doylei (strain ATCC BAA-1458 / RM4099 / 269.97).